The following is a 567-amino-acid chain: UPF0313 protein TM_0337 (567 aa).

The 273-residue stretch at 288 to 560 (KAIETVKFSI…NKMKENVLFK (273 aa)) folds into the Radical SAM core domain. [4Fe-4S] cluster is bound by residues Cys303, Cys307, and Cys310.

This sequence belongs to the UPF0313 family. [4Fe-4S] cluster serves as cofactor.

The polypeptide is UPF0313 protein TM_0337 (Thermotoga maritima (strain ATCC 43589 / DSM 3109 / JCM 10099 / NBRC 100826 / MSB8)).